A 262-amino-acid chain; its full sequence is Aminoglycoside (3'') (9) adenylyltransferase (262 aa).

Residues 1-157 (MTLSIPPSIQ…ERAERLFTPA (157 aa)) form an adenylyltransferase domain region. ATP is bound by residues S36, S46, and D47. Positions 47, 49, and 87 each coordinate Mg(2+). The Proton acceptor role is filled by E87. D130 contributes to the ATP binding site. Positions 158–262 (PAAQLLKALR…AKAHIPTQFT (105 aa)) are helical domain. Streptomycin is bound by residues 173 to 178 (WQSTAD) and H185. ATP-binding residues include K205 and Y231.

In terms of assembly, monomer.

The catalysed reaction is streptomycin + ATP = 3''-O-adenylylstreptomycin + diphosphate. It catalyses the reaction spectinomycin + ATP = 9-O-adenylylspectinomycin + diphosphate. Functionally, mediates bacterial resistance to the antibiotics streptomycin and spectinomycin, does not confer resistance to kanamycin. Binds ATP first, then antibiotic. The chain is Aminoglycoside (3'') (9) adenylyltransferase (aadA) from Salmonella typhimurium (strain LT2 / SGSC1412 / ATCC 700720).